A 514-amino-acid polypeptide reads, in one-letter code: MRFKLDGRIIFSKDVEEETQKDIVEVLENRDIFLKGVPEGKENEASKIEGYEFDGKDLKLKMTSGTYTRAHEGIVRLKKPIMEKVGRKHQIGIRDVAIDRYVVTLTAEPSKVSELKGLKVPECEVELESEKINIVFENLGDGELKRNIIDRAIKFVKNELDKQDQDLTFEVCKIAPGTIVSDYKAKREITFDTDPTELAEPNGWVKRFPGRGQWFYTAPMAKLFRAFESLIIEECIDKIGFDECLFPKLIPLDVMYKMRYLEGLPEGMYYVCPPKREPEMFQDFVNEMMIKKEIPIEKLKTLLRDPAYVLAPAQCEPFYSFFDHELVDVDHPSKFFDKSGWTYRWEGGGAKGLDRVNEFLRGECVWMGTPEFVETVRDDTLKYAENLAEKLDLEYWTEVGDDPFYLEGRKKEDRGIEFPDVPKYEMRLWLPHIKEERKGVAVTSANIHGTHFIEGFGIKDYKERKVWTGCTGYGLTRWVIGFLAQYGYNYDDWPELIQKKVGKLPEIPKLITWP.

Ala-313 lines the L-serine pocket. Cys-315 is a Zn(2+) binding site. Arg-344 contacts L-serine. Residues 344-346 (RWE) and 355-356 (RV) contribute to the ATP site. 361-363 (RGE) contributes to the L-serine binding site. 2 residues coordinate Zn(2+): Glu-363 and Cys-470. ATP is bound at residue Arg-477.

Belongs to the class-II aminoacyl-tRNA synthetase family. Type-2 seryl-tRNA synthetase subfamily. As to quaternary structure, homodimer. Zn(2+) is required as a cofactor.

The protein resides in the cytoplasm. The catalysed reaction is tRNA(Ser) + L-serine + ATP = L-seryl-tRNA(Ser) + AMP + diphosphate + H(+). It carries out the reaction tRNA(Sec) + L-serine + ATP = L-seryl-tRNA(Sec) + AMP + diphosphate + H(+). It participates in aminoacyl-tRNA biosynthesis; selenocysteinyl-tRNA(Sec) biosynthesis; L-seryl-tRNA(Sec) from L-serine and tRNA(Sec): step 1/1. In terms of biological role, catalyzes the attachment of serine to tRNA(Ser). Is also able to aminoacylate tRNA(Sec) with serine, to form the misacylated tRNA L-seryl-tRNA(Sec), which will be further converted into selenocysteinyl-tRNA(Sec). The polypeptide is Type-2 serine--tRNA ligase (Methanococcus maripaludis (strain C7 / ATCC BAA-1331)).